Here is a 382-residue protein sequence, read N- to C-terminus: Sulfate adenylyltransferase (382 aa).

This sequence belongs to the sulfate adenylyltransferase family.

It catalyses the reaction sulfate + ATP + H(+) = adenosine 5'-phosphosulfate + diphosphate. The protein operates within sulfur metabolism; hydrogen sulfide biosynthesis; sulfite from sulfate: step 1/3. The sequence is that of Sulfate adenylyltransferase from Staphylothermus marinus (strain ATCC 43588 / DSM 3639 / JCM 9404 / F1).